A 115-amino-acid polypeptide reads, in one-letter code: Divalent-cation tolerance protein CutA (115 aa).

The Cu cation site is built by Cys19, His86, and His87.

This sequence belongs to the CutA family. In terms of assembly, homotrimer. Cu cation is required as a cofactor.

It is found in the cytoplasm. In terms of biological role, involved in resistance toward heavy metals. The chain is Divalent-cation tolerance protein CutA from Salmonella agona (strain SL483).